Reading from the N-terminus, the 253-residue chain is Large ribosomal subunit protein bL28m (253 aa).

A mitochondrion-targeting transit peptide spans 1 to 55 (MPLHKYPPALWDVLKLKDGIYARLPEHYRRSLLEKHKPYPVHWKPHGLKYRLNPK).

It belongs to the bacterial ribosomal protein bL28 family. In terms of assembly, component of the mitochondrial ribosome large subunit (39S) which comprises a 16S rRNA and about 50 distinct proteins.

It localises to the mitochondrion. In Xenopus laevis (African clawed frog), this protein is Large ribosomal subunit protein bL28m (mrpl28).